Consider the following 333-residue polypeptide: Glycerol-3-phosphate dehydrogenase [NAD(P)+] (333 aa).

W15 and K108 together coordinate NADPH. The sn-glycerol 3-phosphate site is built by K108, G136, and S138. Residue A140 coordinates NADPH. K191, D244, S254, R255, and N256 together coordinate sn-glycerol 3-phosphate. The active-site Proton acceptor is K191. Residue R255 participates in NADPH binding. Positions 279 and 281 each coordinate NADPH.

Belongs to the NAD-dependent glycerol-3-phosphate dehydrogenase family.

It localises to the cytoplasm. It catalyses the reaction sn-glycerol 3-phosphate + NAD(+) = dihydroxyacetone phosphate + NADH + H(+). The enzyme catalyses sn-glycerol 3-phosphate + NADP(+) = dihydroxyacetone phosphate + NADPH + H(+). It functions in the pathway membrane lipid metabolism; glycerophospholipid metabolism. Its function is as follows. Catalyzes the reduction of the glycolytic intermediate dihydroxyacetone phosphate (DHAP) to sn-glycerol 3-phosphate (G3P), the key precursor for phospholipid synthesis. The protein is Glycerol-3-phosphate dehydrogenase [NAD(P)+] of Maricaulis maris (strain MCS10) (Caulobacter maris).